Here is a 1192-residue protein sequence, read N- to C-terminus: Probable ATP-binding protein BrxC (1192 aa).

It belongs to the BrxC family.

In terms of biological role, BREX systems (bacteriophage exclusion) provide immunity against bacteriophage. A core protein of a type 1 BREX system. This system allows phage adsorption but prevents phage DNA replication, without degradation of the phage DNA. Methylation of bacterial DNA by PglX probably guides self/non-self discrimination. When the brxA-brxB-brxC-pglX and pglZ-brxL operons are transformed into a susceptible B.subtilis strain (BEST7003) they confer resistance to bacteriophages SPbeta, SP16, Zeta, phi3T and SP02 and partial protection to phages SP01 and SP82G (these include lytic and temperate phage). They do not protect against phages phi105, rho10 or rho14. Additionally confers a very slight reduction in efficiency of plasmid transformation. This is Probable ATP-binding protein BrxC from Bacillus cereus (strain H3081.97).